Reading from the N-terminus, the 502-residue chain is Glucose-6-phosphate isomerase (502 aa).

Glu-331 acts as the Proton donor in catalysis. Residues His-362 and Lys-471 contribute to the active site.

This sequence belongs to the GPI family.

Its subcellular location is the cytoplasm. The enzyme catalyses alpha-D-glucose 6-phosphate = beta-D-fructose 6-phosphate. The protein operates within carbohydrate biosynthesis; gluconeogenesis. It functions in the pathway carbohydrate degradation; glycolysis; D-glyceraldehyde 3-phosphate and glycerone phosphate from D-glucose: step 2/4. Functionally, catalyzes the reversible isomerization of glucose-6-phosphate to fructose-6-phosphate. This is Glucose-6-phosphate isomerase from Xylella fastidiosa (strain 9a5c).